The chain runs to 102 residues: Small ribosomal subunit protein uS10 (102 aa).

It belongs to the universal ribosomal protein uS10 family. As to quaternary structure, part of the 30S ribosomal subunit.

Its function is as follows. Involved in the binding of tRNA to the ribosomes. This chain is Small ribosomal subunit protein uS10, found in Syntrophus aciditrophicus (strain SB).